We begin with the raw amino-acid sequence, 860 residues long: Translation initiation factor IF-2 (860 aa).

Residues 1-11 (MSDTKSGDDKT) are compositionally biased toward basic and acidic residues. The disordered stretch occupies residues 1–265 (MSDTKSGDDK…MRRRQEKFKR (265 aa)). Residues 79 to 88 (AAPVVQEAPK) show a composition bias toward low complexity. Over residues 110 to 183 (SRSEMEARRR…RRRAEEEARR (74 aa)) the composition is skewed to basic and acidic residues. Positions 358–525 (PRPPVVTIMG…AILLQAEILD (168 aa)) constitute a tr-type G domain. The segment at 367–374 (GHVDHGKT) is G1. Residue 367-374 (GHVDHGKT) participates in GTP binding. The G2 stretch occupies residues 392–396 (GITQH). The segment at 413 to 416 (DTPG) is G3. GTP is bound by residues 413–417 (DTPGH) and 467–470 (NKID). The interval 467-470 (NKID) is G4. Residues 503–505 (SAT) are G5.

This sequence belongs to the TRAFAC class translation factor GTPase superfamily. Classic translation factor GTPase family. IF-2 subfamily.

The protein localises to the cytoplasm. One of the essential components for the initiation of protein synthesis. Protects formylmethionyl-tRNA from spontaneous hydrolysis and promotes its binding to the 30S ribosomal subunits. Also involved in the hydrolysis of GTP during the formation of the 70S ribosomal complex. In Mesorhizobium japonicum (strain LMG 29417 / CECT 9101 / MAFF 303099) (Mesorhizobium loti (strain MAFF 303099)), this protein is Translation initiation factor IF-2.